A 416-amino-acid chain; its full sequence is Hemagglutinin-esterase (416 aa).

The signal sequence occupies residues 1 to 14 (MLSLILFFPSFAFA). Residues 4 to 121 (LILFFPSFAF…GVDSYMELKT (118 aa)) are esterase domain first part. The Virion surface segment spans residues 15 to 393 (VTPVTPYFGP…ESVDVISSSY (379 aa)). Serine 37 serves as the catalytic Nucleophile. Cysteine 41 and cysteine 57 are disulfide-bonded. Asparagine 59 and asparagine 76 each carry an N-linked (GlcNAc...) asparagine; by host glycan. Intrachain disulfides connect cysteine 88-cysteine 136, cysteine 108-cysteine 156, cysteine 192-cysteine 273, cysteine 200-cysteine 246, and cysteine 206-cysteine 213. The receptor binding stretch occupies residues 122–263 (SFNIKLNQMA…GTHNASIVGN (142 aa)). 3 N-linked (GlcNAc...) asparagine; by host glycosylation sites follow: asparagine 257, asparagine 278, and asparagine 294. Residues 264 to 379 (FLFYPTKSYC…SCPQYVKLFD (116 aa)) are esterase domain second part. Cysteines 304 and 309 form a disulfide. N-linked (GlcNAc...) asparagine; by host glycosylation occurs at asparagine 322. The active-site Charge relay system is the histidine 328. An N-linked (GlcNAc...) asparagine; by host glycan is attached at asparagine 343. Cysteine 346 and cysteine 371 are disulfide-bonded. The helical transmembrane segment at 394–414 (FVATWVLLVVVVILIFVIISF) threads the bilayer. Residues 415-416 (FC) are Intravirion-facing.

Belongs to the influenza type C/coronaviruses hemagglutinin-esterase family. Homodimer. Post-translationally, N-glycosylated.

It localises to the virion membrane. The protein localises to the host cell membrane. It catalyses the reaction N-acetyl-9-O-acetylneuraminate + H2O = N-acetylneuraminate + acetate + H(+). The catalysed reaction is N-acetyl-4-O-acetylneuraminate + H2O = N-acetylneuraminate + acetate + H(+). In terms of biological role, structural protein that makes short spikes at the surface of the virus. Contains receptor binding and receptor-destroying activities. Mediates de-O-acetylation of N-acetyl-9-O-acetylneuraminic acid, which is probably the receptor determinant recognized by the virus on the surface of erythrocytes and susceptible cells. This receptor-destroying activity is important for virus release as it probably helps preventing self-aggregation and ensures the efficient spread of the progeny virus from cell to cell. May serve as a secondary viral attachment protein for initiating infection, the spike protein being the major one. Seems to be a 'luxury' protein that is not absolutely necessary for virus infection in culture. However, its presence in the virus may alter its pathogenicity. May become a target for both the humoral and the cellular branches of the immune system. The polypeptide is Hemagglutinin-esterase (HE) (Homo sapiens (Human)).